Here is a 461-residue protein sequence, read N- to C-terminus: Ufm1-specific protease 2 (461 aa).

Catalysis depends on residues Cys294, Asp418, and His420.

Belongs to the peptidase C78 family.

The protein resides in the endoplasmic reticulum. It localises to the cytoplasm. It is found in the nucleus. Its function is as follows. Thiol-dependent isopeptidase that specifically cleaves UFM1, a ubiquitin-like modifier protein, from conjugated proteins, such as CD274/PD-L1, CYB5R3, DDRGK1, MRE11, RPL26/uL24, TRIP4 and RPL26/uL24. While it is also able to mediate the processing of UFM1 precursors, a prerequisite for conjugation reactions, UFSP2 mainly acts as a protein deUFMylase that mediates deconjugation of UFM1 from target proteins. Mediates deUFMylation of RPL26/uL24, a critical step to release the UFM1 ribosome E3 ligase (UREL) complex during the recycling of 60S ribosome subunits from the endoplasmic reticulum. Catalyzes deUFMylation of TRIP4, regulating intracellular nuclear receptors transactivation and thereby regulate cell proliferation and differentiation. The sequence is that of Ufm1-specific protease 2 from Rattus norvegicus (Rat).